We begin with the raw amino-acid sequence, 183 residues long: Type II secretion system protein H (183 aa).

Residues 1–5 constitute a propeptide, leader sequence; the sequence is MRQRG. F6 bears the N-methylphenylalanine mark. The chain crosses the membrane as a helical span at residues 6–26; the sequence is FTVLEMMLVVLLMGSAASLVI.

In terms of assembly, type II secretion is composed of four main components: the outer membrane complex, the inner membrane complex, the cytoplasmic secretion ATPase and the periplasm-spanning pseudopilus. Interacts with core component PulG. Interacts with PulM. Post-translationally, cleaved by prepilin peptidase. In terms of processing, methylated by prepilin peptidase at the amino group of the N-terminal phenylalanine once the leader sequence is cleaved by prepilin peptidase.

It localises to the cell inner membrane. Component of the type II secretion system required for the energy-dependent secretion of extracellular factors such as proteases and toxins from the periplasm. Part of the pseudopilus tip complex that is critical for the recognition and binding of secretion substrates. The polypeptide is Type II secretion system protein H (pulH) (Klebsiella michiganensis (strain ATCC 8724 / DSM 4798 / JCM 20051 / NBRC 3318 / NRRL B-199 / KCTC 1686 / BUCSAV 143 / CCM 1901)).